The following is a 566-amino-acid chain: Multidrug and toxin extrusion protein 1 (566 aa).

Met-1 bears the N-acetylmethionine mark. The next 13 helical transmembrane spans lie at 37–57 (LLVL…ISFI), 72–92 (AVTL…HGLS), 120–140 (LILL…EQIL), 152–172 (LTQT…LYTL), 176–196 (YLLN…ANLV), 216–236 (ALAN…YILW), 257–276 (SFLQ…WWAY), 295–315 (SITY…SVAA), 336–356 (AISL…LLGC), 370–390 (IVAL…FEAL), 409–429 (IVNA…LMFV), 437–457 (LWSG…VFIA), and 543–563 (GLLF…RVYI).

This sequence belongs to the multi antimicrobial extrusion (MATE) (TC 2.A.66.1) family. In terms of tissue distribution, highly expressed in kidney and placenta, moderately in stomach, colon, lung, spleen, skeletal muscle and prostate, and slightly in spleen. In the kidney, found in medulla and cortex, especially in the proximal convoluted and straight tubules. No expression was observed in heart, brain, small intestine and liver. Expressed in Sertoli cells in testis.

It is found in the cell membrane. Its subcellular location is the apical cell membrane. It carries out the reaction thiamine(out) + H(+)(in) = thiamine(in) + H(+)(out). It catalyses the reaction estrone 3-sulfate(in) + H(+)(out) = estrone 3-sulfate(out) + H(+)(in). The catalysed reaction is creatinine(in) + H(+)(out) = creatinine(out) + H(+)(in). The enzyme catalyses agmatine(in) + H(+)(out) = agmatine(out) + H(+)(in). Functionally, multidrug efflux pump that functions as a H(+)/organic cation antiporter. Plays a physiological role in the excretion of cationic compounds including endogenous metabolites, drugs, toxins through the kidney and liver, into urine and bile respectively. Mediates the efflux of endogenous compounds such as creatinine, vitamin B1/thiamine, agmatine and estrone-3-sulfate. May also contribute to regulate the transport of cationic compounds in testis across the blood-testis-barrier. The protein is Multidrug and toxin extrusion protein 1 (Slc47a1) of Rattus norvegicus (Rat).